Reading from the N-terminus, the 209-residue chain is Thymidine kinase (209 aa).

ATP contacts are provided by residues 16–23 and 90–93; these read GPMFAGKT and DEAQ. The Proton acceptor role is filled by E91.

This sequence belongs to the thymidine kinase family. As to quaternary structure, homotetramer.

The protein resides in the cytoplasm. The enzyme catalyses thymidine + ATP = dTMP + ADP + H(+). The polypeptide is Thymidine kinase (Onion yellows phytoplasma (strain OY-M)).